Reading from the N-terminus, the 874-residue chain is Alanine--tRNA ligase (874 aa).

Zn(2+) is bound by residues His562, His566, Cys665, and His669.

This sequence belongs to the class-II aminoacyl-tRNA synthetase family. Zn(2+) is required as a cofactor.

Its subcellular location is the cytoplasm. It catalyses the reaction tRNA(Ala) + L-alanine + ATP = L-alanyl-tRNA(Ala) + AMP + diphosphate. Its function is as follows. Catalyzes the attachment of alanine to tRNA(Ala) in a two-step reaction: alanine is first activated by ATP to form Ala-AMP and then transferred to the acceptor end of tRNA(Ala). Also edits incorrectly charged Ser-tRNA(Ala) and Gly-tRNA(Ala) via its editing domain. This chain is Alanine--tRNA ligase, found in Pseudomonas fluorescens (strain ATCC BAA-477 / NRRL B-23932 / Pf-5).